The primary structure comprises 44 residues: uncharacterized protein (44 aa).

The interval 22-44 (LNSAPAFKSSQNTSTQAKPTFSN) is disordered.

This is an uncharacterized protein from Dictyostelium discoideum (Social amoeba).